The chain runs to 512 residues: Cobyric acid synthase (512 aa).

The region spanning 254–455 (EIDIAVVKLP…LHGLFDNKAL (202 aa)) is the GATase cobBQ-type domain. Cysteine 335 (nucleophile) is an active-site residue. Residue histidine 447 is part of the active site.

Belongs to the CobB/CobQ family. CobQ subfamily.

Its pathway is cofactor biosynthesis; adenosylcobalamin biosynthesis. Catalyzes amidations at positions B, D, E, and G on adenosylcobyrinic A,C-diamide. NH(2) groups are provided by glutamine, and one molecule of ATP is hydrogenolyzed for each amidation. The polypeptide is Cobyric acid synthase (Desulforamulus reducens (strain ATCC BAA-1160 / DSM 100696 / MI-1) (Desulfotomaculum reducens)).